We begin with the raw amino-acid sequence, 348 residues long: Protein RecA (348 aa).

66 to 73 (GPESSGKT) contacts ATP.

It belongs to the RecA family.

The protein localises to the cytoplasm. In terms of biological role, can catalyze the hydrolysis of ATP in the presence of single-stranded DNA, the ATP-dependent uptake of single-stranded DNA by duplex DNA, and the ATP-dependent hybridization of homologous single-stranded DNAs. It interacts with LexA causing its activation and leading to its autocatalytic cleavage. This Neisseria meningitidis serogroup C / serotype 2a (strain ATCC 700532 / DSM 15464 / FAM18) protein is Protein RecA.